A 269-amino-acid polypeptide reads, in one-letter code: MKVYAVLGDPIEHSLSPVMHNAAFQAMGLQASYHAFRVKIPRLRDAILGADAMGFGGLNLTIPLKESAISVVEPDETAEAIGAANTVSFQRGIRGHNTDGIGASLALRHYGVNVRGADVLLIGAGGAARAIAYQLSKDGAEIVVTNRTPERGLALASDLGLEFRPFGEIDDLVRVSDVVINATSVGMRDGDPRLFDGSILKAEQVVFDIIYSRETELLRDARRAGAKAIDGVMMLVYQGAAAFRIWTGLDEPVDVMEAAVRAALGRLNL.

Shikimate-binding positions include 14-16 (SLS) and Thr61. The active-site Proton acceptor is Lys65. An NADP(+)-binding site is contributed by Glu76. Residues Asn85 and Asp99 each contribute to the shikimate site. NADP(+) is bound by residues 123 to 127 (GAGGA), 146 to 151 (NRTPER), and Ile209. Tyr211 provides a ligand contact to shikimate. Position 231 (Gly231) interacts with NADP(+).

It belongs to the shikimate dehydrogenase family. As to quaternary structure, homodimer.

The enzyme catalyses shikimate + NADP(+) = 3-dehydroshikimate + NADPH + H(+). It functions in the pathway metabolic intermediate biosynthesis; chorismate biosynthesis; chorismate from D-erythrose 4-phosphate and phosphoenolpyruvate: step 4/7. In terms of biological role, involved in the biosynthesis of the chorismate, which leads to the biosynthesis of aromatic amino acids. Catalyzes the reversible NADPH linked reduction of 3-dehydroshikimate (DHSA) to yield shikimate (SA). The protein is Shikimate dehydrogenase (NADP(+)) of Methanothrix thermoacetophila (strain DSM 6194 / JCM 14653 / NBRC 101360 / PT) (Methanosaeta thermophila).